A 291-amino-acid polypeptide reads, in one-letter code: 4-hydroxy-tetrahydrodipicolinate synthase (291 aa).

Thr44 serves as a coordination point for pyruvate. Tyr132 acts as the Proton donor/acceptor in catalysis. The active-site Schiff-base intermediate with substrate is Lys160. A pyruvate-binding site is contributed by Ile202.

Belongs to the DapA family. As to quaternary structure, homotetramer; dimer of dimers.

Its subcellular location is the cytoplasm. The enzyme catalyses L-aspartate 4-semialdehyde + pyruvate = (2S,4S)-4-hydroxy-2,3,4,5-tetrahydrodipicolinate + H2O + H(+). Its pathway is amino-acid biosynthesis; L-lysine biosynthesis via DAP pathway; (S)-tetrahydrodipicolinate from L-aspartate: step 3/4. Its function is as follows. Catalyzes the condensation of (S)-aspartate-beta-semialdehyde [(S)-ASA] and pyruvate to 4-hydroxy-tetrahydrodipicolinate (HTPA). The polypeptide is 4-hydroxy-tetrahydrodipicolinate synthase (Syntrophus aciditrophicus (strain SB)).